A 439-amino-acid polypeptide reads, in one-letter code: Cobyrinate a,c-diamide synthase (439 aa).

The GATase cobBQ-type domain maps to 238-431 (KIAVAYDKAF…AHVNFLGNIE (194 aa)). The active-site Nucleophile is the Cys-320.

Belongs to the CobB/CbiA family. It depends on Mg(2+) as a cofactor.

It carries out the reaction cob(II)yrinate + 2 L-glutamine + 2 ATP + 2 H2O = cob(II)yrinate a,c diamide + 2 L-glutamate + 2 ADP + 2 phosphate + 2 H(+). The protein operates within cofactor biosynthesis; adenosylcobalamin biosynthesis; cob(II)yrinate a,c-diamide from sirohydrochlorin (anaerobic route): step 10/10. Catalyzes the ATP-dependent amidation of the two carboxylate groups at positions a and c of cobyrinate, using either L-glutamine or ammonia as the nitrogen source. This is Cobyrinate a,c-diamide synthase from Clostridium tetani (strain Massachusetts / E88).